We begin with the raw amino-acid sequence, 504 residues long: Immunoglobulin-binding protein EibC (504 aa).

A signal peptide spans 1–26; it reads MSKKFTMTLLSSSLAGLLVMSGGVSA. The interval 27–413 is surface exposed passenger domain; sequence QEEKYTVPYA…IAANTRTLQQ (387 aa). Residues 27 to 453 are Extracellular-facing; it reads QEEKYTVPYA…GLFQPYSVGK (427 aa). A head domain region spans residues 154–280; the sequence is DAKASGEFSV…TGTESDKTYG (127 aa). The neck stretch occupies residues 281-296; sequence TRVLGGLSDGTRNSDA. The segment at 297-342 is right-handed coiled-coil (RHcc); sequence ATVGQLNRKVGGVYDDVKARITVESEKQKKYTDQKTSEVNEKVEAR. Residues 343–368 form a saddle domain region; the sequence is TTVGVDSDGKLTRAEGATKTIAVNDG. The tract at residues 369–434 is left-handed coiled-coil (LHcc); the sequence is LVALSGRTDR…INENHKEMKR (66 aa). Residues 411-438 are a coiled coil; it reads LQQHSARLDSQQRQINENHKEMKRAAAQ. The interval 411–453 is outer membrane translocation of the passenger domain; the sequence is LQQHSARLDSQQRQINENHKEMKRAAAQSAALTGLFQPYSVGK. 4 consecutive transmembrane segments (beta stranded) span residues 454–464, 467–478, 481–490, and 494–504; these read FNATAAVGGYS, QALAVGVGYRFN, TAAKAGVAFS, and ASWNVGVNFEF. The segment at 454 to 504 is translocator domain; that stretch reads FNATAAVGGYSDQQALAVGVGYRFNEQTAAKAGVAFSDGDASWNVGVNFEF.

Belongs to the autotransporter-2 (AT-2) (TC 1.B.40) family. Eib subfamily. In terms of assembly, homotrimer; can probably form mixed heterotrimers in vivo. Will form mixed heterotrimers with EibD; these are correctly located in the outer membrane and bind IgG Fc, although less well than homotrimers. In denaturing gels runs as a band of about 200 kDa. Binds the Fc portion of immunoglobulins; binds more than 1 Fc per subunit.

The protein localises to the cell surface. The protein resides in the cell outer membrane. In terms of biological role, binds (in a non-immune fashion) to the Fc portion of human IgG and less well to IgA; binding occurs on the cell surface. Confers the ability to survive exposure to human serum exposure. Binds to the Fc portion of human IgG and IgA and to whole mouse antibodies also via Fc. This Escherichia coli protein is Immunoglobulin-binding protein EibC.